We begin with the raw amino-acid sequence, 248 residues long: Phosphate import ATP-binding protein PstB (248 aa).

The region spanning 1-243 (MAVNDVNVFY…PQHNLTQGYI (243 aa)) is the ABC transporter domain. An ATP-binding site is contributed by 33 to 40 (GPSGCGKS).

Belongs to the ABC transporter superfamily. Phosphate importer (TC 3.A.1.7) family. In terms of assembly, the complex is composed of two ATP-binding proteins (PstB), two transmembrane proteins (PstC and PstA) and a solute-binding protein (PstS).

It is found in the cell inner membrane. It carries out the reaction phosphate(out) + ATP + H2O = ADP + 2 phosphate(in) + H(+). Functionally, part of the ABC transporter complex PstSACB involved in phosphate import. Responsible for energy coupling to the transport system. The protein is Phosphate import ATP-binding protein PstB of Rhodospirillum rubrum (strain ATCC 11170 / ATH 1.1.1 / DSM 467 / LMG 4362 / NCIMB 8255 / S1).